The chain runs to 92 residues: Small ribosomal subunit protein uS19 (92 aa).

It belongs to the universal ribosomal protein uS19 family.

Functionally, protein S19 forms a complex with S13 that binds strongly to the 16S ribosomal RNA. This chain is Small ribosomal subunit protein uS19, found in Photobacterium profundum (strain SS9).